The primary structure comprises 77 residues: U14-theraphotoxin-Cg1a 2 (77 aa).

The N-terminal stretch at 1 to 21 (MKTSVLLVILGIAAITVQCTA) is a signal peptide. Residues 22–49 (SESVKQDSLRTFVDAVLGWNAEMASEAR) constitute a propeptide that is removed on maturation. Cystine bridges form between cysteine 50–cysteine 64, cysteine 57–cysteine 69, and cysteine 63–cysteine 75. Lysine amide is present on lysine 77.

This sequence belongs to the neurotoxin 10 (Hwtx-1) family. 65 (Jztx-21) subfamily. As to expression, expressed by the venom gland.

Its subcellular location is the secreted. Probable ion channel inhibitor. In Chilobrachys guangxiensis (Chinese earth tiger tarantula), this protein is U14-theraphotoxin-Cg1a 2.